The primary structure comprises 235 residues: Lipoprotein-releasing system ATP-binding protein LolD (235 aa).

Positions Leu5–Gly235 constitute an ABC transporter domain. Position 41 to 48 (Gly41 to Ser48) interacts with ATP.

Belongs to the ABC transporter superfamily. Lipoprotein translocase (TC 3.A.1.125) family. In terms of assembly, the complex is composed of two ATP-binding proteins (LolD) and two transmembrane proteins (LolC and LolE).

The protein resides in the cell inner membrane. Its function is as follows. Part of the ABC transporter complex LolCDE involved in the translocation of mature outer membrane-directed lipoproteins, from the inner membrane to the periplasmic chaperone, LolA. Responsible for the formation of the LolA-lipoprotein complex in an ATP-dependent manner. The polypeptide is Lipoprotein-releasing system ATP-binding protein LolD (Vibrio parahaemolyticus serotype O3:K6 (strain RIMD 2210633)).